The primary structure comprises 311 residues: Ribonuclease HIII (311 aa).

Residues 93-310 (LSAIGSDEVG…TKKALDIAKH (218 aa)) enclose the RNase H type-2 domain. 3 residues coordinate a divalent metal cation: D99, E100, and D204.

The protein belongs to the RNase HII family. RnhC subfamily. Mn(2+) is required as a cofactor. Mg(2+) serves as cofactor.

The protein resides in the cytoplasm. The enzyme catalyses Endonucleolytic cleavage to 5'-phosphomonoester.. Its function is as follows. Endonuclease that specifically degrades the RNA of RNA-DNA hybrids. The chain is Ribonuclease HIII from Geobacillus kaustophilus (strain HTA426).